The following is a 249-amino-acid chain: Cytoplasmic envelopment protein 1 (249 aa).

This sequence belongs to the herpesviridae cytoplasmic envelopment protein 1 family.

The protein resides in the virion. It is found in the virion tegument. Its subcellular location is the host cytoplasm. It localises to the host Golgi apparatus. Plays a critical role in cytoplasmic virus egress. Participates in the final step of tegumentation and envelope acquisition within the host cytoplasm. This chain is Cytoplasmic envelopment protein 1 (UL103), found in Homo sapiens (Human).